Here is a 397-residue protein sequence, read N- to C-terminus: MDSLATSINQFALELSKKLAESAQGKNIFFSSWSISTSLTIVYLGAKGTTAAQMAQVLQFNRDQGVKCDPESEKKRKMEFNLSNSEEIHSDFQTLISEILKPNDDYLLKTANAIYGEKTYAFHNKYLEDMKTYFGAEPQPVNFVEASDQIRKDINSWVERQTEGKIQNLLPDDSVDSTTRMILVNALYFKGIWEHQFLVQNTTEKPFRINETTSKPVQMMFMKKKLHIFHIEKPKAVGLQLYYKSRDLSLLILLPEDINGLEQLEKAITYEKLNEWTSADMMELYEVQLHLPKFKLEDSYDLKSTLSSMGMSDAFSQSKADFSGMSSARNLFLSNVFHKAFVEINEQGTEAAAGSGSEIDIRIRVPSIEFNANHPFLFFIRHNKTNTILFYGRLCSP.

A disulfide bridge connects residues Cys68 and Cys395. A Nuclear localization signal motif is present at residues 74–77 (KKRK).

This sequence belongs to the serpin family. Ov-serpin subfamily. As to expression, expressed specifically in myeloid cells and the bone marrow.

Its subcellular location is the nucleus. It localises to the cytoplasm. In terms of biological role, protease inhibitor that may play a role in the regulation of protease activities during hematopoiesis and apoptosis induced by TNF. May regulate protease activities in the cytoplasm and in the nucleus. This Homo sapiens (Human) protein is Serpin B10 (SERPINB10).